The following is a 396-amino-acid chain: Acetate kinase (396 aa).

Asparagine 8 contributes to the Mg(2+) binding site. Lysine 15 lines the ATP pocket. Arginine 89 lines the substrate pocket. Aspartate 146 (proton donor/acceptor) is an active-site residue. Residues 206–210 (HIGNG), 283–285 (DMR), and 331–335 (GVGEN) contribute to the ATP site. Residue glutamate 383 coordinates Mg(2+).

Belongs to the acetokinase family. Homodimer. It depends on Mg(2+) as a cofactor. Mn(2+) serves as cofactor.

The protein resides in the cytoplasm. The enzyme catalyses acetate + ATP = acetyl phosphate + ADP. It participates in metabolic intermediate biosynthesis; acetyl-CoA biosynthesis; acetyl-CoA from acetate: step 1/2. In terms of biological role, catalyzes the formation of acetyl phosphate from acetate and ATP. Can also catalyze the reverse reaction. This Streptococcus pneumoniae (strain ATCC 700669 / Spain 23F-1) protein is Acetate kinase.